The chain runs to 183 residues: Peptidyl-tRNA hydrolase (183 aa).

Position 14 (Y14) interacts with tRNA. Catalysis depends on H19, which acts as the Proton acceptor. 3 residues coordinate tRNA: Y64, N66, and N112.

Belongs to the PTH family. Monomer.

It is found in the cytoplasm. The catalysed reaction is an N-acyl-L-alpha-aminoacyl-tRNA + H2O = an N-acyl-L-amino acid + a tRNA + H(+). Its function is as follows. Hydrolyzes ribosome-free peptidyl-tRNAs (with 1 or more amino acids incorporated), which drop off the ribosome during protein synthesis, or as a result of ribosome stalling. Functionally, catalyzes the release of premature peptidyl moieties from peptidyl-tRNA molecules trapped in stalled 50S ribosomal subunits, and thus maintains levels of free tRNAs and 50S ribosomes. This Anaplasma phagocytophilum (strain HZ) protein is Peptidyl-tRNA hydrolase.